A 260-amino-acid chain; its full sequence is Hydroxyethylthiazole kinase 1 (260 aa).

M39 serves as a coordination point for substrate. 2 residues coordinate ATP: R115 and T160. G187 is a substrate binding site.

The protein belongs to the Thz kinase family. It depends on Mg(2+) as a cofactor.

It catalyses the reaction 5-(2-hydroxyethyl)-4-methylthiazole + ATP = 4-methyl-5-(2-phosphooxyethyl)-thiazole + ADP + H(+). Its pathway is cofactor biosynthesis; thiamine diphosphate biosynthesis; 4-methyl-5-(2-phosphoethyl)-thiazole from 5-(2-hydroxyethyl)-4-methylthiazole: step 1/1. In terms of biological role, catalyzes the phosphorylation of the hydroxyl group of 4-methyl-5-beta-hydroxyethylthiazole (THZ). This Streptococcus pneumoniae (strain 70585) protein is Hydroxyethylthiazole kinase 1.